The chain runs to 831 residues: Phenylalanine--tRNA ligase beta subunit (831 aa).

The tRNA-binding domain maps to 44-155 (GPVDGPVTVG…GAAEPGADGA (112 aa)). The 76-residue stretch at 414-489 (WSPPPIRMGV…RLEGLEVIPS (76 aa)) folds into the B5 domain. Mg(2+) is bound by residues aspartate 467, aspartate 473, glutamate 476, and glutamate 477. In terms of domain architecture, FDX-ACB spans 737 to 830 (SPYPAVFQDV…AAERVGAVLR (94 aa)).

The protein belongs to the phenylalanyl-tRNA synthetase beta subunit family. Type 1 subfamily. In terms of assembly, tetramer of two alpha and two beta subunits. It depends on Mg(2+) as a cofactor.

Its subcellular location is the cytoplasm. It carries out the reaction tRNA(Phe) + L-phenylalanine + ATP = L-phenylalanyl-tRNA(Phe) + AMP + diphosphate + H(+). This is Phenylalanine--tRNA ligase beta subunit from Mycobacterium bovis (strain ATCC BAA-935 / AF2122/97).